Here is an 879-residue protein sequence, read N- to C-terminus: Prostaglandin F2 receptor negative regulator (879 aa).

Positions 1–25 are cleaved as a signal peptide; the sequence is MGRLASRPLLLALLSLALCRGRVVR. 2 Ig-like C2-type domains span residues 26–129 and 149–268; these read VPTA…ATVQ and PSAR…KAVE. The Extracellular portion of the chain corresponds to 26 to 832; sequence VPTATLVRVV…MDVLNAFKYP (807 aa). 2 disulfides stabilise this stretch: Cys-43-Cys-119 and Cys-169-Cys-247. Residue Asn-44 is glycosylated (N-linked (GlcNAc...) asparagine). Thr-271 is subject to Phosphothreonine. Ig-like C2-type domains are found at residues 276-394, 406-536, 544-662, and 688-813; these read PSVL…EAVS, PDYQ…DVFS, ALED…AWSP, and PIFN…AEIH. Asn-286, Asn-300, Asn-383, and Asn-413 each carry an N-linked (GlcNAc...) asparagine glycan. The cysteines at positions 299 and 373 are disulfide-linked. The Endoplasmic reticulum retention signal signature appears at 424-427; that stretch reads PTEL. A disulfide bridge connects residues Cys-429 and Cys-515. N-linked (GlcNAc...) asparagine glycans are attached at residues Asn-525, Asn-600, Asn-618, and Asn-691. Cys-571 and Cys-655 are oxidised to a cystine. A Cell attachment site motif is present at residues 703 to 705; sequence RGD. Cys-711 and Cys-793 form a disulfide bridge. The chain crosses the membrane as a helical span at residues 833-853; sequence LLIGVGLSTVIGLLSCLIGYC. Over 854–879 the chain is Cytoplasmic; that stretch reads SSHWCCKKEVQETRRERRRLMSMEMD.

Interacts with CD9 and CD81. Part of a complex composed of CD9, CD81 and IGSF8. Also seems to interact with CD63, CD82 and CD151.

Its subcellular location is the endoplasmic reticulum membrane. It localises to the golgi apparatus. It is found in the trans-Golgi network membrane. Inhibits the binding of prostaglandin F2-alpha (PGF2-alpha) to its specific FP receptor, by decreasing the receptor number rather than the affinity constant. Functional coupling with the prostaglandin F2-alpha receptor seems to occur. In myoblasts, associates with tetraspanins CD9 and CD81 to prevent myotube fusion during muscle regeneration. This Homo sapiens (Human) protein is Prostaglandin F2 receptor negative regulator (PTGFRN).